A 393-amino-acid polypeptide reads, in one-letter code: Phosphoglycerate kinase (393 aa).

Residues 21 to 23 (DFN), Arg36, 59 to 62 (HLGR), Arg118, and Arg151 contribute to the substrate site. Residues Lys201, Glu323, and 349–352 (GGDS) each bind ATP.

The protein belongs to the phosphoglycerate kinase family. Monomer.

The protein resides in the cytoplasm. The enzyme catalyses (2R)-3-phosphoglycerate + ATP = (2R)-3-phospho-glyceroyl phosphate + ADP. It participates in carbohydrate degradation; glycolysis; pyruvate from D-glyceraldehyde 3-phosphate: step 2/5. This is Phosphoglycerate kinase from Moorella thermoacetica (strain ATCC 39073 / JCM 9320).